The sequence spans 303 residues: Small ribosomal subunit protein bS1m (303 aa).

N-acetylserine is present on serine 2. Residues 2–13 (SFAQILRGSRAM) constitute a mitochondrion; not cleaved transit peptide.

Belongs to the bacterial ribosomal protein bS1 family. In terms of assembly, component of the mitochondrial small ribosomal subunit (mt-SSU). Mature yeast 74S mitochondrial ribosomes consist of a small (37S) and a large (54S) subunit. The 37S small subunit contains a 15S ribosomal RNA (15S mt-rRNA) and at least 32 different proteins. The 54S large subunit contains a 21S rRNA (21S mt-rRNA) and at least 45 different proteins. This subunit is mutually exclusive with mug178/small ribosomal subunit protein L51-b.

The protein localises to the mitochondrion. In terms of biological role, component of the mitochondrial ribosome (mitoribosome), a dedicated translation machinery responsible for the synthesis of mitochondrial genome-encoded proteins, including at least some of the essential transmembrane subunits of the mitochondrial respiratory chain. The mitoribosomes are attached to the mitochondrial inner membrane and translation products are cotranslationally integrated into the membrane. bS1m functionally interacts with the 5'-UTR of mitochondrial mRNAs. Plays an essential role in mitochondrial translation. The chain is Small ribosomal subunit protein bS1m (mrp51) from Schizosaccharomyces pombe (strain 972 / ATCC 24843) (Fission yeast).